Here is a 348-residue protein sequence, read N- to C-terminus: GTP 3',8-cyclase (348 aa).

Residues 24–248 (PFGRAVTYLR…TDIDYQTGGP (225 aa)) enclose the Radical SAM core domain. Residue arginine 33 coordinates GTP. [4Fe-4S] cluster is bound by residues cysteine 40 and cysteine 44. Residue tyrosine 46 coordinates S-adenosyl-L-methionine. [4Fe-4S] cluster is bound at residue cysteine 47. Arginine 82 serves as a coordination point for GTP. Glycine 86 lines the S-adenosyl-L-methionine pocket. Threonine 115 is a GTP binding site. Residue serine 139 coordinates S-adenosyl-L-methionine. Residue lysine 175 participates in GTP binding. Methionine 209 lines the S-adenosyl-L-methionine pocket. Residues cysteine 272 and cysteine 275 each coordinate [4Fe-4S] cluster. Position 277-279 (277-279 (RVR)) interacts with GTP. Cysteine 289 provides a ligand contact to [4Fe-4S] cluster.

The protein belongs to the radical SAM superfamily. MoaA family. As to quaternary structure, monomer and homodimer. [4Fe-4S] cluster is required as a cofactor.

The catalysed reaction is GTP + AH2 + S-adenosyl-L-methionine = (8S)-3',8-cyclo-7,8-dihydroguanosine 5'-triphosphate + 5'-deoxyadenosine + L-methionine + A + H(+). Its pathway is cofactor biosynthesis; molybdopterin biosynthesis. In terms of biological role, catalyzes the cyclization of GTP to (8S)-3',8-cyclo-7,8-dihydroguanosine 5'-triphosphate. This Rhizobium etli (strain ATCC 51251 / DSM 11541 / JCM 21823 / NBRC 15573 / CFN 42) protein is GTP 3',8-cyclase.